The following is a 120-amino-acid chain: Large ribosomal subunit protein bL12 (120 aa).

The protein belongs to the bacterial ribosomal protein bL12 family. Homodimer. Part of the ribosomal stalk of the 50S ribosomal subunit. Forms a multimeric L10(L12)X complex, where L10 forms an elongated spine to which 2 to 4 L12 dimers bind in a sequential fashion. Binds GTP-bound translation factors.

Its function is as follows. Forms part of the ribosomal stalk which helps the ribosome interact with GTP-bound translation factors. Is thus essential for accurate translation. The polypeptide is Large ribosomal subunit protein bL12 (Lactobacillus gasseri (strain ATCC 33323 / DSM 20243 / BCRC 14619 / CIP 102991 / JCM 1131 / KCTC 3163 / NCIMB 11718 / NCTC 13722 / AM63)).